The chain runs to 242 residues: MQVIVLPLVFLATFATSGSLAAPDASPEIVPVDGGLSGYGTTTRYWDCCKPSCAWKENINTPTMTPVQTCAIDGNTVVNASVQSGCIGGSSYMCSNQQAFVVNSTLAFGFAAGSFTGGVDNNLCCSCMLLTFQGQLAGKQFLVQITNTGGDLGSTSSIWPFPGGGVGIFTQGCHDQWTPRGAAGGDQYGGVYSVEQCSDLPEVLQPGCRFRFEFLENVSNPQVSFQQVQCPAEIVAISNCAL.

Positions 1–21 (MQVIVLPLVFLATFATSGSLA) are cleaved as a signal peptide. Asp-47 serves as the catalytic Nucleophile. Residues Asn-79, Asn-103, and Asn-217 are each glycosylated (N-linked (GlcNAc...) asparagine).

The protein belongs to the glycosyl hydrolase 45 (cellulase K) family. As to expression, expressed in larval carcasses and gut, and adult gut.

The protein localises to the secreted. The enzyme catalyses Endohydrolysis of (1-&gt;4)-beta-D-glucosidic linkages in cellulose, lichenin and cereal beta-D-glucans.. In Phaedon cochleariae (Mustard beetle), this protein is Endoglucanase.